The primary structure comprises 266 residues: RNA-binding protein 7 (266 aa).

At Gly-2 the chain carries N-acetylglycine. The RRM domain maps to 10 to 87 (RTLFVGNLET…RPIKIQFRSG (78 aa)). 2 ZCCHC8 binding regions span residues 25 to 35 (LLFELFHQAGP) and 59 to 76 (HEVS…IKLY). Residues 90 to 115 (HAPQDVSLSYPQHHVGNSSPTSTSPS) are compositionally biased toward polar residues. Residues 90 to 118 (HAPQDVSLSYPQHHVGNSSPTSTSPSRYE) are disordered. 2 positions are modified to phosphoserine: Ser-136 and Ser-137. Arg-152 carries the omega-N-methylarginine modification. The disordered stretch occupies residues 162-266 (SSPLDQSGFS…RDGKWRSSRH (105 aa)). A compositionally biased stretch (low complexity) spans 173–188 (SVQSHSHSFNQSSSSQ). Phosphoserine is present on Ser-204. The span at 209 to 266 (ADRHYSREQRYTDHGSDHHYRGKRDDFFYEDRNHDDWSHDYDNRRDSSRDGKWRSSRH) shows a compositional bias: basic and acidic residues.

In terms of assembly, component of the nuclear exosome targeting (NEXT) complex composed of MTREX, ZCCHC8, and RBM7 that directs a subset of non-coding short-lived RNAs for exosomal degradation. Interacts with ZCCHC8 and SF3B2/SAP145. Binds to MTREX through ZCCHC8. Interacts with YWHAE and YWHAZ; these interactions are stress-dependent and RBM7 phosphorylation dependent; release RNA from the NEXT complex and may affect RNA targeting to the nuclear RNA exosomome for degradation. Interacts with MEPCE and LARP7, the core subunits of 7SK snRNP; upon genotoxic stress this interaction is enhanced, triggering the release of inactive P-TEFb complex from the core and P-TEFb complex activation. Post-translationally, phosphorylated at Ser-136 by MAPK14/p38-alpha-activated MAPKAPK2/MK2; this phosphorylation is stress-dependent; this phosphorylation decreases its RNA-binding capacity therefore affecting RNA nuclear exosome-mediated degradation. This phosphorylation mediates YWHAE and YWHAZ interactions. As to expression, ubiquitous.

Its subcellular location is the nucleus. The protein localises to the nucleoplasm. RNA-binding subunit of the trimeric nuclear exosome targeting (NEXT) complex, a complex that functions as an RNA exosome cofactor that directs a subset of non-coding short-lived RNAs for exosomal degradation. NEXT is involved in surveillance and turnover of aberrant transcripts and non-coding RNAs. Binds preferentially polyuridine sequences and associates with newly synthesized RNAs, including pre-mRNAs and short-lived exosome substrates such as promoter upstream transcripts (PROMPTs), enhancer RNAs (eRNAs), and 3'-extended products from small nuclear RNAs (snRNAs). Participates in several biological processes including DNA damage response (DDR) and stress response. During stress response, activation of the p38MAPK-MK2 pathway decreases RBM7-RNA-binding and subsequently the RNA exosome degradation activities, thereby modulating the turnover of non-coding transcriptome. Participates in DNA damage response (DDR), through its interaction with MEPCE and LARP7, the core subunits of 7SK snRNP complex, that release the positive transcription elongation factor b (P-TEFb) complex from the 7SK snRNP. In turn, activation of P-TEFb complex induces the transcription of P-TEFb-dependent DDR genes to promote cell viability. This Homo sapiens (Human) protein is RNA-binding protein 7.